The sequence spans 566 residues: Protein OBERON 1 (566 aa).

The span at 1–10 (MGTSSGSNLP) shows a compositional bias: polar residues. The tract at residues 1–79 (MGTSSGSNLP…KTGPDSHDQH (79 aa)) is disordered. The segment covering 18-29 (QQLQTSLSLVSS) has biased composition (low complexity). The span at 47-60 (ESASSQETWPTSKS) shows a compositional bias: polar residues. The segment covering 64-79 (RKTDSGKTGPDSHDQH) has biased composition (basic and acidic residues). The PHD-type zinc finger occupies 225 to 289 (LCMCVICNKF…LFKCRACNHT (65 aa)). The stretch at 407–522 (EEKTRMYKKA…LFEKIKEQES (116 aa)) forms a coiled coil. A disordered region spans residues 545 to 566 (YNASSPRVDPRSNQRNPFRSNP). Over residues 555-566 (RSNQRNPFRSNP) the composition is skewed to polar residues.

As to quaternary structure, self-interacts. Interacts with OBE2, OBE3 and OBE4. Binds to VPg of pea seed borne mosaic virus (PSbMV), turnip mosaic virus (TuMV) and lettuce mosaic virus (LMV), but not with VPg of tobacco etch virus (TEV), cowpea mosaic virus (CPMV), tomato black ring virus (TBRV) and grapevine fan leaf virus (GFLV). Interacts with RBL. Expressed in roots, seedlings, stems, leaves, flowers and siliques, especially in the vasculature.

Its subcellular location is the nucleus. It is found in the nucleoplasm. Functionally, probable transcription factor that acts together with OBE2 for the maintenance and/or establishment of both the shoot and root meristems, probably by controlling the expression of the meristem genes such as WUS, PLT1 and PLT2 and of genes required for auxin responses. Promotes cell meristematic activity via the WUSCHEL-CLAVATA pathway. Involved in the development of the basal pole and in auxin-mediated root and vascular development in the embryo. Confers sensitivity to turnip mosaic virus (TuMV) probably by promoting viral movement and multiplication via interaction with TuMV VPg. This Arabidopsis thaliana (Mouse-ear cress) protein is Protein OBERON 1.